A 131-amino-acid polypeptide reads, in one-letter code: Profilin-2 (131 aa).

Belongs to the profilin family. In terms of assembly, occurs in many kinds of cells as a complex with monomeric actin in a 1:1 ratio.

The protein resides in the cytoplasm. Its subcellular location is the cytoskeleton. Its function is as follows. Binds to actin and affects the structure of the cytoskeleton. At high concentrations, profilin prevents the polymerization of actin, whereas it enhances it at low concentrations. By binding to PIP2, it inhibits the formation of IP3 and DG. In Solanum lycopersicum (Tomato), this protein is Profilin-2.